The sequence spans 599 residues: Elongation factor 4 (599 aa).

One can recognise a tr-type G domain in the interval 2–184 (KNIRNFSIIA…RLVRDIPPPQ (183 aa)). GTP is bound by residues 14–19 (DHGKST) and 131–134 (NKID).

It belongs to the TRAFAC class translation factor GTPase superfamily. Classic translation factor GTPase family. LepA subfamily.

It localises to the cell inner membrane. It carries out the reaction GTP + H2O = GDP + phosphate + H(+). Required for accurate and efficient protein synthesis under certain stress conditions. May act as a fidelity factor of the translation reaction, by catalyzing a one-codon backward translocation of tRNAs on improperly translocated ribosomes. Back-translocation proceeds from a post-translocation (POST) complex to a pre-translocation (PRE) complex, thus giving elongation factor G a second chance to translocate the tRNAs correctly. Binds to ribosomes in a GTP-dependent manner. This is Elongation factor 4 from Salmonella gallinarum (strain 287/91 / NCTC 13346).